A 500-amino-acid polypeptide reads, in one-letter code: NAD(P)H-quinone oxidoreductase chain 4, chloroplastic (500 aa).

14 helical membrane passes run Phe4–Leu24, Ile37–Leu57, Ile87–Val107, Leu113–Ser130, Leu134–Met154, Phe167–Leu187, Ala208–Ile228, His242–Ile262, Ala272–Ala292, Ile305–Asp325, Gly330–Gly350, Leu386–Thr406, Val416–Met436, and Leu462–Val482.

This sequence belongs to the complex I subunit 4 family.

Its subcellular location is the plastid. It is found in the chloroplast thylakoid membrane. It catalyses the reaction a plastoquinone + NADH + (n+1) H(+)(in) = a plastoquinol + NAD(+) + n H(+)(out). The catalysed reaction is a plastoquinone + NADPH + (n+1) H(+)(in) = a plastoquinol + NADP(+) + n H(+)(out). This chain is NAD(P)H-quinone oxidoreductase chain 4, chloroplastic, found in Ceratophyllum demersum (Rigid hornwort).